A 230-amino-acid polypeptide reads, in one-letter code: Extracellular deoxyribonuclease (230 aa).

A signal peptide spans 1–20; sequence MFRPLLSLCLALLVSAPAHA.

Belongs to the EndA/NucM nuclease family.

The protein resides in the secreted. The polypeptide is Extracellular deoxyribonuclease (dns) (Aeromonas hydrophila).